Reading from the N-terminus, the 291-residue chain is Bis(5'-nucleosyl)-tetraphosphatase, symmetrical (291 aa).

Belongs to the Ap4A hydrolase family.

The enzyme catalyses P(1),P(4)-bis(5'-adenosyl) tetraphosphate + H2O = 2 ADP + 2 H(+). Its function is as follows. Hydrolyzes diadenosine 5',5'''-P1,P4-tetraphosphate to yield ADP. The sequence is that of Bis(5'-nucleosyl)-tetraphosphatase, symmetrical from Coxiella burnetii (strain CbuK_Q154) (Coxiella burnetii (strain Q154)).